The sequence spans 508 residues: Serine/threonine protein kinase OSK3 (508 aa).

The 253-residue stretch at 17-269 (YNLGRTLGIG…IREIREHQWF (253 aa)) folds into the Protein kinase domain. ATP is bound by residues 23–31 (LGIGSFGKV) and Lys46. Asp140 functions as the Proton acceptor in the catalytic mechanism. The region spanning 290 to 330 (MIDEDTLQDVVNLGYGKDHVCESLRNRLQNEATVAYYLLLD) is the UBA domain. The KA1 domain occupies 459–507 (NGRLPAVIKFEIQLYKTRDEKYLLDMQRVTGPQLLFLDFCADFLTKLRV).

This sequence belongs to the protein kinase superfamily. Ser/Thr protein kinase family. Interacts with HDR1. Strongly expressed in immature seeds. Mostly expressed in panicles, and to a lower extent, in leaf sheaths.

It localises to the nucleus. The catalysed reaction is L-seryl-[protein] + ATP = O-phospho-L-seryl-[protein] + ADP + H(+). The enzyme catalyses L-threonyl-[protein] + ATP = O-phospho-L-threonyl-[protein] + ADP + H(+). This chain is Serine/threonine protein kinase OSK3, found in Oryza sativa subsp. indica (Rice).